The following is a 423-amino-acid chain: Putative galacturan 1,4-alpha-galacturonidase C (423 aa).

The first 20 residues, 1-20 (MQLRASVLLSFLGLASVGHA), serve as a signal peptide directing secretion. N-linked (GlcNAc...) asparagine glycosylation is found at Asn-92, Asn-98, Asn-118, Asn-156, Asn-179, and Asn-191. 2 PbH1 repeats span residues 215 to 236 (ATNIQLTNFVYQGGDDCIAIKP) and 238 to 258 (SYNIDIQNVTCRGGNGIAIGS). Catalysis depends on Asp-229, which acts as the Proton donor. The cysteines at positions 231 and 248 are disulfide-linked. Residues Asn-245, Asn-344, and Asn-362 are each glycosylated (N-linked (GlcNAc...) asparagine). A disulfide bridge connects residues Cys-379 and Cys-385. Asn-400 carries an N-linked (GlcNAc...) asparagine glycan.

This sequence belongs to the glycosyl hydrolase 28 family.

It is found in the secreted. It carries out the reaction [(1-&gt;4)-alpha-D-galacturonosyl](n) + H2O = alpha-D-galacturonate + [(1-&gt;4)-alpha-D-galacturonosyl](n-1). Specific in hydrolyzing the terminal glycosidic bond of polygalacturonic acid and oligogalacturonates. The polypeptide is Putative galacturan 1,4-alpha-galacturonidase C (rgxC) (Aspergillus niger (strain ATCC MYA-4892 / CBS 513.88 / FGSC A1513)).